A 209-amino-acid chain; its full sequence is Uracil phosphoribosyltransferase (209 aa).

Residues Arg78, Arg103, and 130–138 contribute to the 5-phospho-alpha-D-ribose 1-diphosphate site; that span reads DPMLATAGS. Residues Ile193 and 198–200 contribute to the uracil site; that span reads GDA. A 5-phospho-alpha-D-ribose 1-diphosphate-binding site is contributed by Asp199.

The protein belongs to the UPRTase family. It depends on Mg(2+) as a cofactor.

The enzyme catalyses UMP + diphosphate = 5-phospho-alpha-D-ribose 1-diphosphate + uracil. The protein operates within pyrimidine metabolism; UMP biosynthesis via salvage pathway; UMP from uracil: step 1/1. Its activity is regulated as follows. Allosterically activated by GTP. Its function is as follows. Catalyzes the conversion of uracil and 5-phospho-alpha-D-ribose 1-diphosphate (PRPP) to UMP and diphosphate. The chain is Uracil phosphoribosyltransferase from Methylibium petroleiphilum (strain ATCC BAA-1232 / LMG 22953 / PM1).